A 98-amino-acid chain; its full sequence is Molybdopterin synthase sulfur carrier subunit (98 aa).

At G98 the chain carries 1-thioglycine; alternate. G98 is subject to Glycyl adenylate; alternate.

Belongs to the MoaD family. MOCS2A subfamily. In terms of assembly, heterotetramer; composed of 2 small (MOCS2A) and 2 large (MOCS2B) subunits. C-terminal thiocarboxylation occurs in 2 steps, it is first acyl-adenylated (-COAMP) via the hesA/moeB/thiF part of MOCS3, then thiocarboxylated (-COSH) via the rhodanese domain of MOCS3.

Its subcellular location is the cytoplasm. The protein operates within cofactor biosynthesis; molybdopterin biosynthesis. In terms of biological role, acts as a sulfur carrier required for molybdopterin biosynthesis. Component of the molybdopterin synthase complex that catalyzes the conversion of precursor Z into molybdopterin by mediating the incorporation of 2 sulfur atoms into precursor Z to generate a dithiolene group. In the complex, serves as sulfur donor by being thiocarboxylated (-COSH) at its C-terminus by MOCS3. After interaction with MOCS2B, the sulfur is then transferred to precursor Z to form molybdopterin. The chain is Molybdopterin synthase sulfur carrier subunit from Aedes aegypti (Yellowfever mosquito).